The following is a 242-amino-acid chain: N-glycosylase/DNA lyase (242 aa).

8-oxoguanine-binding residues include Gln-25, Ser-52, and Trp-63. A helix-hairpin-helix region spans residues 119–183 (KSYYRDMNRL…VDARIERITR (65 aa)). Lys-143 functions as the Schiff-base intermediate with DNA in the catalytic mechanism. Residues Phe-147 and Pro-173 each contribute to the 8-oxoguanine site. The active site involves Asp-175. The 8-oxoguanine site is built by Asp-209 and Trp-213.

This sequence belongs to the archaeal N-glycosylase/DNA lyase (AGOG) family.

The catalysed reaction is 2'-deoxyribonucleotide-(2'-deoxyribose 5'-phosphate)-2'-deoxyribonucleotide-DNA = a 3'-end 2'-deoxyribonucleotide-(2,3-dehydro-2,3-deoxyribose 5'-phosphate)-DNA + a 5'-end 5'-phospho-2'-deoxyribonucleoside-DNA + H(+). DNA repair enzyme that is part of the base excision repair (BER) pathway; protects from oxidative damage by removing the major product of DNA oxidation, 8-oxoguanine (GO), from single- and double-stranded DNA substrates. In Methanopyrus kandleri (strain AV19 / DSM 6324 / JCM 9639 / NBRC 100938), this protein is N-glycosylase/DNA lyase.